The chain runs to 428 residues: D-amino acid dehydrogenase (428 aa).

3–17 (VVILGSGVVGVASAY) contributes to the FAD binding site.

The protein belongs to the DadA oxidoreductase family. FAD serves as cofactor.

It catalyses the reaction a D-alpha-amino acid + A + H2O = a 2-oxocarboxylate + AH2 + NH4(+). It functions in the pathway amino-acid degradation; D-alanine degradation; NH(3) and pyruvate from D-alanine: step 1/1. Oxidative deamination of D-amino acids. The chain is D-amino acid dehydrogenase from Burkholderia multivorans (strain ATCC 17616 / 249).